Consider the following 249-residue polypeptide: tRNA (guanine-N(1)-)-methyltransferase (249 aa).

Residues Gly-121 and 141-146 (LGDFVL) contribute to the S-adenosyl-L-methionine site.

This sequence belongs to the RNA methyltransferase TrmD family. Homodimer.

The protein localises to the cytoplasm. The catalysed reaction is guanosine(37) in tRNA + S-adenosyl-L-methionine = N(1)-methylguanosine(37) in tRNA + S-adenosyl-L-homocysteine + H(+). In terms of biological role, specifically methylates guanosine-37 in various tRNAs. In Cereibacter sphaeroides (strain ATCC 17023 / DSM 158 / JCM 6121 / CCUG 31486 / LMG 2827 / NBRC 12203 / NCIMB 8253 / ATH 2.4.1.) (Rhodobacter sphaeroides), this protein is tRNA (guanine-N(1)-)-methyltransferase.